Consider the following 274-residue polypeptide: S-methyl-5'-thioadenosine phosphorylase (274 aa).

Residues S20, 62-63 (RH), and 95-96 (SA) contribute to the phosphate site. M194 lines the substrate pocket. T195 serves as a coordination point for phosphate. 218–220 (DYD) is a substrate binding site.

This sequence belongs to the PNP/MTAP phosphorylase family. MTAP subfamily. Homohexamer. Dimer of a homotrimer.

The enzyme catalyses S-methyl-5'-thioadenosine + phosphate = 5-(methylsulfanyl)-alpha-D-ribose 1-phosphate + adenine. Its pathway is amino-acid biosynthesis; L-methionine biosynthesis via salvage pathway; S-methyl-5-thio-alpha-D-ribose 1-phosphate from S-methyl-5'-thioadenosine (phosphorylase route): step 1/1. Catalyzes the reversible phosphorylation of S-methyl-5'-thioadenosine (MTA) to adenine and 5-methylthioribose-1-phosphate. Involved in the breakdown of MTA, a major by-product of polyamine biosynthesis. Responsible for the first step in the methionine salvage pathway after MTA has been generated from S-adenosylmethionine. Has broad substrate specificity with 6-aminopurine nucleosides as preferred substrates. The chain is S-methyl-5'-thioadenosine phosphorylase from Hyperthermus butylicus (strain DSM 5456 / JCM 9403 / PLM1-5).